Here is a 198-residue protein sequence, read N- to C-terminus: Density-regulated protein (198 aa).

An N-acetylalanine modification is found at alanine 2. Phosphoserine is present on residues serine 20 and serine 73. Positions 72–110 (NSPKQEAGISEGQGTAGEEEEKKKQKRGGRGQIKQKKKT) are disordered. Residue threonine 86 is modified to Phosphothreonine. A compositionally biased stretch (basic residues) spans 95–110 (KQKRGGRGQIKQKKKT). In terms of domain architecture, SUI1 spans 115-182 (VTIAKIPRAK…DIIDVIQEKW (68 aa)). Serine 189 is subject to Phosphoserine.

This sequence belongs to the DENR family. In terms of assembly, interacts with MCTS1 (via PUA domain); the complex regulates translation reinitiation. As to expression, highly expressed in heart and skeletal muscle and moderately expressed in the brain, placenta, liver and pancreas. Weakly expressed in the lung and kidney.

The protein resides in the cytoplasm. Translation regulator forming a complex with MCTS1 to promote translation reinitiation. Translation reinitiation is the process where the small ribosomal subunit remains attached to the mRNA following termination of translation of a regulatory upstream ORF (uORF), and resume scanning on the same mRNA molecule to initiate translation of a downstream ORF, usually the main ORF (mORF). The MCTS1/DENR complex is pivotal to two linked mechanisms essential for translation reinitiation. Firstly, the dissociation of deacylated tRNAs from post-termination 40S ribosomal complexes during ribosome recycling. Secondly, the recruitment in an EIF2-independent manner of aminoacylated initiator tRNA to P site of 40S ribosomes for a new round of translation. This regulatory mechanism governs the translation of more than 150 genes which translation reinitiation is MCTS1/DENR complex-dependent. The protein is Density-regulated protein (DENR) of Homo sapiens (Human).